A 137-amino-acid chain; its full sequence is Small ribosomal subunit protein uS12 (137 aa).

The disordered stretch occupies residues 1 to 26; sequence MPTINQLVTKGRKRKASKTKSPALNQ.

It belongs to the universal ribosomal protein uS12 family. In terms of assembly, part of the 30S ribosomal subunit. Contacts proteins S8 and S17. May interact with IF1 in the 30S initiation complex.

Its function is as follows. With S4 and S5 plays an important role in translational accuracy. In terms of biological role, interacts with and stabilizes bases of the 16S rRNA that are involved in tRNA selection in the A site and with the mRNA backbone. Located at the interface of the 30S and 50S subunits, it traverses the body of the 30S subunit contacting proteins on the other side and probably holding the rRNA structure together. The combined cluster of proteins S8, S12 and S17 appears to hold together the shoulder and platform of the 30S subunit. This chain is Small ribosomal subunit protein uS12, found in Mycoplasmopsis pulmonis (strain UAB CTIP) (Mycoplasma pulmonis).